The sequence spans 103 residues: Small ribosomal subunit protein uS10 (103 aa).

This sequence belongs to the universal ribosomal protein uS10 family. Part of the 30S ribosomal subunit.

Functionally, involved in the binding of tRNA to the ribosomes. The protein is Small ribosomal subunit protein uS10 of Tolumonas auensis (strain DSM 9187 / NBRC 110442 / TA 4).